Here is a 378-residue protein sequence, read N- to C-terminus: Probable 3-hydroxyisobutyryl-CoA hydrolase 2 (378 aa).

Glycine 115, glutamate 138, and aspartate 146 together coordinate substrate. A Microbody targeting signal motif is present at residues 376 to 378 (AKL).

The protein belongs to the enoyl-CoA hydratase/isomerase family.

The protein localises to the peroxisome. The enzyme catalyses 3-hydroxy-2-methylpropanoyl-CoA + H2O = 3-hydroxy-2-methylpropanoate + CoA + H(+). It participates in amino-acid degradation; L-valine degradation. Involved in valine catabolism. In Arabidopsis thaliana (Mouse-ear cress), this protein is Probable 3-hydroxyisobutyryl-CoA hydrolase 2.